The chain runs to 85 residues: Progonadoliberin-2 (85 aa).

The first 23 residues, 1 to 23 (MCVSRLALLLGLLLCVGAQLSFA), serve as a signal peptide directing secretion. At Gln24 the chain carries Pyrrolidone carboxylic acid. Glycine amide is present on Gly33.

This sequence belongs to the GnRH family. In terms of tissue distribution, expressed in only one cell group in the mesencephalon.

The protein localises to the secreted. Functionally, stimulates the secretion of gonadotropins. The chain is Progonadoliberin-2 (gnrh2) from Haplochromis burtoni (Burton's mouthbrooder).